Here is a 583-residue protein sequence, read N- to C-terminus: Ankyrin repeat and SOCS box protein 15 (583 aa).

ANK repeat units follow at residues lysine 75–tryptophan 104, aspartate 110–threonine 139, lysine 143–glutamine 172, lysine 176–leucine 205, phenylalanine 209–alanine 238, aspartate 242–valine 271, alanine 275–isoleucine 304, serine 307–alanine 336, glutamate 349–leucine 378, aspartate 379–cysteine 408, and threonine 416–leucine 444. One can recognise an SOCS box domain in the interval tryptophan 524–aspartate 579.

This sequence belongs to the ankyrin SOCS box (ASB) family.

It participates in protein modification; protein ubiquitination. Functionally, may be a substrate-recognition component of a SCF-like ECS (Elongin-Cullin-SOCS-box protein) E3 ubiquitin-protein ligase complex which mediates the ubiquitination and subsequent proteasomal degradation of target proteins. The polypeptide is Ankyrin repeat and SOCS box protein 15 (Asb15) (Mus musculus (Mouse)).